Here is a 145-residue protein sequence, read N- to C-terminus: Immunoglobulin iota chain (145 aa).

The N-terminal stretch at 1–19 is a signal peptide; sequence MSWAPVLLMLFVYCTGCGP. Residues 20 to 41 form a framework-1 region; that stretch reads QPVLHQPPAMSSALGTTIRLTC. The Ig-like V-type domain occupies 20–132; the sequence is QPVLHQPPAM…EKEEREREWE (113 aa). Cys41 and Cys115 are joined by a disulfide. Residues 42–56 form a complementarity-determining-1 region; sequence TLRNDHDIGVYSVYW. The segment at 57–70 is framework-2; it reads YQQRPGHPPRFLLR. The interval 71–81 is complementarity-determining-2; it reads YFSQSDKSQGP. The framework-3 stretch occupies residues 82–115; it reads QVPPRFSGSKDVARNRGYLSISELQPEDEAMYYC. Over residues 121–130 the composition is skewed to basic and acidic residues; it reads SSEKEERERE. The interval 121–145 is disordered; it reads SSEKEEREREWEEEMEPTAARTRVP.

It belongs to the immunoglobulin superfamily. As to quaternary structure, interacts with IGLL1. Interacts with SYNV1/HRD1 (via N-terminus); this interaction leads to increased VPREB1 ubiquitination and degradation in pre-B cells, possibly through a lysosomal, not proteasomal, pathway. As to expression, only expressed by pre-B-cells.

It is found in the endoplasmic reticulum. Functionally, associates with the Ig-mu chain to form a molecular complex that is expressed on the surface of pre-B-cells. This complex presumably regulates Ig gene rearrangements in the early steps of B-cell differentiation. In Homo sapiens (Human), this protein is Immunoglobulin iota chain (VPREB1).